Consider the following 1274-residue polypeptide: Clustered mitochondria protein homolog (1274 aa).

A disordered region spans residues 1 to 53 (MAQTNGELEHSKGMSSPAVRISQAQKSTKLTVDPESPEQVANGTHAEGEQPEE). TPR repeat units lie at residues 293–326 (SPSF…PNNP), 510–543 (DYGG…KKHP), and 628–661 (AKEA…ERVD). Positions 342–586 (DITRSQENYL…RVTPLDVMWQ (245 aa)) constitute a Clu domain. 2 disordered regions span residues 631–655 (AAKK…EEAL) and 893–925 (VSNG…ARAA). 4 TPR repeats span residues 998-1031 (AKLY…TERT), 1040-1073 (ILSY…WKII), 1082-1115 (ITTM…CESL), and 1124-1157 (ATIL…FLQQ). The interval 1197 to 1274 (INMTPRTLGT…KLRGSKKSSA (78 aa)) is disordered. Residues 1200-1217 (TPRTLGTRVQPQVGQTAP) are compositionally biased toward polar residues.

Belongs to the CLU family. In terms of assembly, may associate with the eukaryotic translation initiation factor 3 (eIF-3) complex.

The protein resides in the cytoplasm. MRNA-binding protein involved in proper cytoplasmic distribution of mitochondria. In Aspergillus terreus (strain NIH 2624 / FGSC A1156), this protein is Clustered mitochondria protein homolog.